The sequence spans 79 residues: Major outer membrane lipoprotein Lpp 2 (79 aa).

Positions 1–21 (MNRTNKLILGAVVLGSTLLAG) are cleaved as a signal peptide. A lipid anchor (N-palmitoyl cysteine) is attached at C22. C22 is lipidated: S-diacylglycerol cysteine. Repeats lie at residues 25–35 (NAKIDQLSSDV) and 39–49 (SAKVDQLSNDV). Residues 28-69 (IDQLSSDVQTLSAKVDQLSNDVNAMRSDVQAAKDDAARANQR) are a coiled coil. K79 is modified (N6-murein peptidoglycan lysine).

This sequence belongs to the Lpp family. As to quaternary structure, homotrimer.

Its subcellular location is the cell outer membrane. It localises to the secreted. The protein localises to the cell wall. In terms of biological role, a highly abundant outer membrane lipoprotein that controls the distance between the inner and outer membranes. The only protein known to be covalently linked to the peptidoglycan network (PGN). Also non-covalently binds the PGN. The link between the cell outer membrane and PGN contributes to maintenance of the structural and functional integrity of the cell envelope, and maintains the correct distance between the PGN and the outer membrane. In Salmonella typhi, this protein is Major outer membrane lipoprotein Lpp 2.